Here is a 210-residue protein sequence, read N- to C-terminus: Ribonuclease HII (210 aa).

One can recognise an RNase H type-2 domain in the interval 16-207; it reads AIVVGVDEVG…VKKCIISTKN (192 aa). The a divalent metal cation site is built by Asp-22, Glu-23, and Asp-116.

This sequence belongs to the RNase HII family. The cofactor is Mn(2+). Mg(2+) serves as cofactor.

The protein localises to the cytoplasm. It catalyses the reaction Endonucleolytic cleavage to 5'-phosphomonoester.. Endonuclease that specifically degrades the RNA of RNA-DNA hybrids. The protein is Ribonuclease HII of Anaplasma phagocytophilum (strain HZ).